A 651-amino-acid chain; its full sequence is Meiotic expression up-regulated protein 6 (651 aa).

2 stretches are compositionally biased toward basic and acidic residues: residues 1–12 (MSYEGREERPEQ) and 21–30 (VSEHNEHDSG). Residues 1–102 (MSYEGREERP…EKKSKKKAKD (102 aa)) form a disordered region. Residues 72 to 83 (TVDNIDPADDDP) show a composition bias toward acidic residues. Residues 90–102 (KVEEKKSKKKAKD) are compositionally biased toward basic and acidic residues. A PH domain is found at 194 to 261 (CRGLLFYSKS…WITDLKNAIA (68 aa)). 3 disordered regions span residues 365–430 (TVEA…GTPI), 468–514 (VATP…KGGN), and 587–630 (TIKP…QMPQ). Composition is skewed to polar residues over residues 410–429 (ESTS…NGTP) and 478–490 (PSTA…SVVS). Basic residues predominate over residues 497–514 (KKAGKKHHRHHKKKKGGN). The segment covering 587–604 (TIKPETPLTPTTTPTPRT) has biased composition (low complexity).

This Schizosaccharomyces pombe (strain 972 / ATCC 24843) (Fission yeast) protein is Meiotic expression up-regulated protein 6 (meu6).